Here is a 65-residue protein sequence, read N- to C-terminus: uncharacterized protein (65 aa).

This is an uncharacterized protein from Rhizobium fredii (Sinorhizobium fredii).